Here is a 254-residue protein sequence, read N- to C-terminus: Anti-sigma-M factor RsmA (254 aa).

Over 1–112 (MSAADKDPDK…AARPHVHPVR (112 aa)) the chain is Cytoplasmic. The chain crosses the membrane as a helical span at residues 113 to 133 (MIAGAAGLCAVATAIGVGAVV). The Extracellular segment spans residues 134-254 (DAPPPAPSAP…LLASTVVPRA (121 aa)).

As to quaternary structure, interacts with ECF RNA polymerase sigma factor SigM; this should inhibit the interaction of SigM with the RNA polymerase catalytic core. Post-translationally, probably cleaved within the membrane by Rip1 near the cytoplasmic membrane interface.

The protein resides in the cell membrane. In terms of biological role, an anti-sigma factor for extracytoplasmic function (ECF) sigma factor SigM. ECF sigma factors are held in an inactive form by an anti-sigma factor until released by regulated intramembrane proteolysis (RIP). RIP occurs when an extracytoplasmic signal triggers a concerted proteolytic cascade to transmit information and elicit cellular responses. The membrane-spanning regulatory substrate protein is first cut extracytoplasmically (site-1 protease, S1P), then within the membrane itself (site-2 protease, S2P, Rip1), while cytoplasmic proteases finish degrading the regulatory protein, liberating the sigma factor. The protein is Anti-sigma-M factor RsmA (rsmA) of Mycobacterium tuberculosis (strain ATCC 35801 / TMC 107 / Erdman).